The following is a 134-amino-acid chain: ATP synthase epsilon chain, chloroplastic (134 aa).

Belongs to the ATPase epsilon chain family. F-type ATPases have 2 components, CF(1) - the catalytic core - and CF(0) - the membrane proton channel. CF(1) has five subunits: alpha(3), beta(3), gamma(1), delta(1), epsilon(1). CF(0) has three main subunits: a, b and c.

It is found in the plastid. The protein localises to the chloroplast thylakoid membrane. In terms of biological role, produces ATP from ADP in the presence of a proton gradient across the membrane. The sequence is that of ATP synthase epsilon chain, chloroplastic from Gracilaria tenuistipitata var. liui (Red alga).